Reading from the N-terminus, the 167-residue chain is uncharacterized protein (167 aa).

4 helical membrane-spanning segments follow: residues 13 to 33 (LIYLFIWGLIISGLSDLTWLI), 37 to 57 (VLAVSLFFISLQFSQKSFLPY), 61 to 81 (WFALVIFIVLMWATLSWKIGE), and 103 to 123 (LLLISLWLFLWNINDAVLVPS).

It is found in the cell membrane. This is an uncharacterized protein from Haemophilus influenzae (strain ATCC 51907 / DSM 11121 / KW20 / Rd).